The primary structure comprises 340 residues: MTHSLIIEEVLAHPQDISWLPWAVQYFFFIGIAACAALFACYLHWRKKDAATEENRALLIAITCAITAPLALTADLHQTARVWHFYAWPTPWSWMPWGALFLPLFTGFLALWFLAQQIKRLFNKSYNVTKWLALASALCAVGLLIYTGREVSVVLARPIWFSYAFPVAMFLSALQAFFALMIVAARRDSVRLPKILWGQIWTLAALGLVVAMWVSGDTLSGTAIRQWITVALSAKYYAVGWVALWVCTLLFCSLALRHPLSQLRRVLLVLSALALCWLMRWTLLIQVQTVPKFNAQFNPYSLPGGTDGWLAILGTFGLWIALLIIIRETLNGLTRRLQHG.

9 consecutive transmembrane segments (helical) span residues 19–39 (WLPW…AALF), 57–77 (ALLI…ADLH), 94–114 (WMPW…LWFL), 128–148 (VTKW…IYTG), 164–184 (AFPV…MIVA), 195–215 (ILWG…MWVS), 236–256 (YYAV…SLAL), 266–286 (VLLV…LLIQ), and 306–326 (TDGW…LIII).

It belongs to the NrfD family. Probably composed of three subunits: TtrA, TtrB and TtrC.

The protein localises to the cell inner membrane. Functionally, part of a membrane-bound tetrathionate reductase that catalyzes the reduction of tetrathionate to thiosulfate. TtrC probably anchors TtrA and TtrB to the periplasmic face of the cytoplasmic membrane. May transfer electrons from membrane quinol to TtrB. During mice infection, the ability to use tetrathionate as an electron acceptor is a growth advantage for S.typhimurium over the competing microbiota in the lumen of the inflamed gut. This is Tetrathionate reductase subunit C (ttrC) from Salmonella typhimurium (strain LT2 / SGSC1412 / ATCC 700720).